Reading from the N-terminus, the 1141-residue chain is Probable ubiquitin carboxyl-terminal hydrolase 2 (1141 aa).

A Phosphothreonine modification is found at threonine 112. Phosphoserine is present on serine 113. A Phosphothreonine modification is found at threonine 115. The region spanning 614–1124 (IGLENTGNLC…NPYMLTYIRK (511 aa)) is the USP domain. The active-site Nucleophile is cysteine 623. At threonine 721 the chain carries Phosphothreonine. Serine 722 bears the Phosphoserine mark. Positions 748–770 (EEQAQGLEQEQGQDEAKSPAEQS) are disordered. The active-site Proton acceptor is the histidine 1076.

Belongs to the peptidase C19 family.

The catalysed reaction is Thiol-dependent hydrolysis of ester, thioester, amide, peptide and isopeptide bonds formed by the C-terminal Gly of ubiquitin (a 76-residue protein attached to proteins as an intracellular targeting signal).. The sequence is that of Probable ubiquitin carboxyl-terminal hydrolase 2 (ubp2) from Schizosaccharomyces pombe (strain 972 / ATCC 24843) (Fission yeast).